Consider the following 306-residue polypeptide: Aspartate carbamoyltransferase catalytic subunit (306 aa).

Carbamoyl phosphate-binding residues include Arg-53 and Thr-54. Residue Lys-82 participates in L-aspartate binding. Residues Arg-103, His-131, and Gln-134 each contribute to the carbamoyl phosphate site. The L-aspartate site is built by Arg-164 and Arg-226. Residues Leu-263 and Pro-264 each contribute to the carbamoyl phosphate site.

The protein belongs to the aspartate/ornithine carbamoyltransferase superfamily. ATCase family. In terms of assembly, heterododecamer (2C3:3R2) of six catalytic PyrB chains organized as two trimers (C3), and six regulatory PyrI chains organized as three dimers (R2).

The enzyme catalyses carbamoyl phosphate + L-aspartate = N-carbamoyl-L-aspartate + phosphate + H(+). Its pathway is pyrimidine metabolism; UMP biosynthesis via de novo pathway; (S)-dihydroorotate from bicarbonate: step 2/3. Catalyzes the condensation of carbamoyl phosphate and aspartate to form carbamoyl aspartate and inorganic phosphate, the committed step in the de novo pyrimidine nucleotide biosynthesis pathway. The chain is Aspartate carbamoyltransferase catalytic subunit from Methanocaldococcus jannaschii (strain ATCC 43067 / DSM 2661 / JAL-1 / JCM 10045 / NBRC 100440) (Methanococcus jannaschii).